The following is a 232-amino-acid chain: Probable ADP-ribosylation factor GTPase-activating protein AGD15 (232 aa).

Residues 16–130 (SKILEALLKH…RWVSPGAIQP (115 aa)) form the Arf-GAP domain. Residues 31–54 (CADCRSKAPRWASVNLGIFICMQC) form a C4-type zinc finger. A disordered region spans residues 203–232 (PNQKNENFSSEVNQNRRTTIAPPSSWATFD). The span at 206 to 232 (KNENFSSEVNQNRRTTIAPPSSWATFD) shows a compositional bias: polar residues.

Functionally, GTPase-activating protein (GAP) for ADP ribosylation factor (ARF). This is Probable ADP-ribosylation factor GTPase-activating protein AGD15 (AGD15) from Arabidopsis thaliana (Mouse-ear cress).